Reading from the N-terminus, the 204-residue chain is Rho GDP-dissociation inhibitor 1 (204 aa).

The segment at 1–36 (MAEQEPTAEQLAQIAAENEEDEHSVNYKPPAQKSIQ) is disordered. At alanine 2 the chain carries N-acetylalanine. At serine 34 the chain carries Phosphoserine. Lysine 43 is subject to N6-acetyllysine. Serine 47 carries the post-translational modification Phosphoserine. A hydrophobic region spans residues 66 to 83 (NVPNVVVTRLTLVCSTAP). Serine 101 is subject to Phosphoserine; by PKA. An N6-acetyllysine modification is found at lysine 105. Serine 115 carries the post-translational modification Phosphoserine; by PKC. At lysine 127 the chain carries N6-acetyllysine. Glycyl lysine isopeptide (Lys-Gly) (interchain with G-Cter in SUMO1); alternate cross-links involve residues lysine 138 and lysine 141. Residues lysine 138 and lysine 141 each participate in a glycyl lysine isopeptide (Lys-Gly) (interchain with G-Cter in SUMO2); alternate cross-link. Lysine 141 is modified (N6-acetyllysine; alternate). Position 141 is an N6-succinyllysine; alternate (lysine 141). An N6-acetyllysine modification is found at lysine 178.

This sequence belongs to the Rho GDI family. As to quaternary structure, monomer. Interacts with FER. Interacts with PLXNB3. Forms a heterodimer with RAC1. Interacts with RHOA, the affinity is increased by three orders of magnitude when RHOA is prenylated. Interacts with PSMD10; the interaction increases ARHGDIA association with RHOA, leading to ARHGDIA-mediated inactivation of RHOA and ROCK and prolonged AKT activation. Interacts with KANK2; the interaction is direct and may regulate the interaction of ARHGDIA with RHOA, RAC1 and CDC42. Interacts with RHOC. Interacts with CDC42. Interacts with NGFR (via death domain); NGFR binding decreases the affinity for RHOA. In terms of tissue distribution, brain, lung, thymus, spleen, small intestine, and kidney, and weakly in heart and liver.

Its subcellular location is the cytoplasm. Controls Rho proteins homeostasis. Regulates the GDP/GTP exchange reaction of the Rho proteins by inhibiting the dissociation of GDP from them, and the subsequent binding of GTP to them. Retains Rho proteins such as CDC42, RAC1 and RHOA in an inactive cytosolic pool, regulating their stability and protecting them from degradation. Actively involved in the recycling and distribution of activated Rho GTPases in the cell, mediates extraction from membranes of both inactive and activated molecules due its exceptionally high affinity for prenylated forms. Through the modulation of Rho proteins, may play a role in cell motility regulation. In glioma cells, inhibits cell migration and invasion by mediating the signals of SEMA5A and PLXNB3 that lead to inactivation of RAC1. The sequence is that of Rho GDP-dissociation inhibitor 1 (ARHGDIA) from Bos taurus (Bovine).